The following is a 319-amino-acid chain: GTP cyclohydrolase MptA (319 aa).

Belongs to the GTP cyclohydrolase IV family. Homodimer. The cofactor is Fe(2+).

The catalysed reaction is GTP + H2O = 7,8-dihydroneopterin 2',3'-cyclic phosphate + formate + diphosphate + H(+). The protein operates within cofactor biosynthesis; 5,6,7,8-tetrahydromethanopterin biosynthesis. In terms of biological role, converts GTP to 7,8-dihydro-D-neopterin 2',3'-cyclic phosphate, the first intermediate in the biosynthesis of coenzyme methanopterin. The polypeptide is GTP cyclohydrolase MptA (Methanosarcina barkeri (strain Fusaro / DSM 804)).